A 328-amino-acid chain; its full sequence is GMP reductase (328 aa).

Cysteine 176 serves as the catalytic Thioimidate intermediate. 205-228 provides a ligand contact to NADP(+); it reads IIADGGIRTHGDVAKSIRFGATMV.

Belongs to the IMPDH/GMPR family. GuaC type 2 subfamily.

It carries out the reaction IMP + NH4(+) + NADP(+) = GMP + NADPH + 2 H(+). Functionally, catalyzes the irreversible NADPH-dependent deamination of GMP to IMP. It functions in the conversion of nucleobase, nucleoside and nucleotide derivatives of G to A nucleotides, and in maintaining the intracellular balance of A and G nucleotides. The protein is GMP reductase of Bacillus cereus (strain ATCC 14579 / DSM 31 / CCUG 7414 / JCM 2152 / NBRC 15305 / NCIMB 9373 / NCTC 2599 / NRRL B-3711).